Consider the following 274-residue polypeptide: Thymidylate synthase (274 aa).

A dUMP-binding site is contributed by Arg-21. His-51 is a (6R)-5,10-methylene-5,6,7,8-tetrahydrofolate binding site. Arg-123–Arg-124 contributes to the dUMP binding site. Cys-156 acts as the Nucleophile in catalysis. DUMP is bound by residues Arg-176 to Asp-179, Asn-187, and His-217 to Tyr-219. Asp-179 is a (6R)-5,10-methylene-5,6,7,8-tetrahydrofolate binding site. Ala-273 provides a ligand contact to (6R)-5,10-methylene-5,6,7,8-tetrahydrofolate.

Belongs to the thymidylate synthase family. Bacterial-type ThyA subfamily. Homodimer.

The protein resides in the cytoplasm. The catalysed reaction is dUMP + (6R)-5,10-methylene-5,6,7,8-tetrahydrofolate = 7,8-dihydrofolate + dTMP. It functions in the pathway pyrimidine metabolism; dTTP biosynthesis. Functionally, catalyzes the reductive methylation of 2'-deoxyuridine-5'-monophosphate (dUMP) to 2'-deoxythymidine-5'-monophosphate (dTMP) while utilizing 5,10-methylenetetrahydrofolate (mTHF) as the methyl donor and reductant in the reaction, yielding dihydrofolate (DHF) as a by-product. This enzymatic reaction provides an intracellular de novo source of dTMP, an essential precursor for DNA biosynthesis. This Christiangramia forsetii (strain DSM 17595 / CGMCC 1.15422 / KT0803) (Gramella forsetii) protein is Thymidylate synthase.